Reading from the N-terminus, the 303-residue chain is MRPDGIAGFALTIAAPAKINLALHVVGQRADGHHLLESLVTFAECGDGIGLAAAEADHFTVSGRFAPDLSPSAENTSGNLVLRARDVLRRELASQGRAAGPVHLHLEKNLPVASGIGGGSADAAATLRGLLSLWGASLEPARLGSLALELGADVPMCLDGRPLIARGIGEEITSIPDLPSFAIVLVNPLVEVSTPVVFRLLIRKSNPPLVLPENLRSTAAWLAALASMRNDLEPPARALEPMIEAVSTALEDAGATLVRMSGSGATCFGLFADEKSASLAAETISASQPRWYVRATRTAGKSG.

Residue K18 is part of the active site. 111–121 contacts ATP; sequence PVASGIGGGSA. The active site involves D153.

Belongs to the GHMP kinase family. IspE subfamily.

It catalyses the reaction 4-CDP-2-C-methyl-D-erythritol + ATP = 4-CDP-2-C-methyl-D-erythritol 2-phosphate + ADP + H(+). Its pathway is isoprenoid biosynthesis; isopentenyl diphosphate biosynthesis via DXP pathway; isopentenyl diphosphate from 1-deoxy-D-xylulose 5-phosphate: step 3/6. In terms of biological role, catalyzes the phosphorylation of the position 2 hydroxy group of 4-diphosphocytidyl-2C-methyl-D-erythritol. The protein is 4-diphosphocytidyl-2-C-methyl-D-erythritol kinase of Sinorhizobium medicae (strain WSM419) (Ensifer medicae).